We begin with the raw amino-acid sequence, 840 residues long: DNA helicase MCM8 (840 aa).

Positions 16 to 54 (QSWKRGRGGGNFSGKWREREHRPDLSKTTGKRTSEQTPQ) are disordered. The span at 30 to 40 (KWREREHRPDL) shows a compositional bias: basic and acidic residues. The MCM domain maps to 402–609 (LFKLIVNSLC…HHDHLLSEHV (208 aa)). 454–461 (GDPGLGKS) is an ATP binding site. The residue at position 630 (Ser-630) is a Phosphoserine.

The protein belongs to the MCM family. In terms of assembly, component of the MCM8-MCM9 complex, which forms a hexamer composed of MCM8 and MCM9. Interacts with the DNA mismatch repair (MMR) complex composed at least of MSH2, MSH3, MSH6, PMS1 and MLH1. Interacts with RAD51; the interaction recruits RAD51 to DNA damage sites. Interacts with the MRN complex composed of MRE11, RAD50 and NBN/NBS1. Interacts with CDC6 and ORC2. Interacts with HROB; the interaction recruits the MCM8-MCM9 complex to DNA damage sites. As to expression, highest levels in placenta, lung and pancreas. Low levels in skeletal muscle and kidney. Expressed in various tumors with highest levels in colon and lung cancers.

It localises to the nucleus. It is found in the chromosome. It carries out the reaction ATP + H2O = ADP + phosphate + H(+). In terms of biological role, component of the MCM8-MCM9 complex, a complex involved in the repair of double-stranded DNA breaks (DBSs) and DNA interstrand cross-links (ICLs) by homologous recombination (HR). Required for DNA resection by the MRE11-RAD50-NBN/NBS1 (MRN) complex by recruiting the MRN complex to the repair site and by promoting the complex nuclease activity. Probably by regulating the localization of the MNR complex, indirectly regulates the recruitment of downstream effector RAD51 to DNA damage sites including DBSs and ICLs. The MCM8-MCM9 complex is dispensable for DNA replication and S phase progression. However, may play a non-essential for DNA replication: may be involved in the activation of the prereplicative complex (pre-RC) during G(1) phase by recruiting CDC6 to the origin recognition complex (ORC). Probably by regulating HR, plays a key role during gametogenesis. Stabilizes MCM9 protein. The chain is DNA helicase MCM8 (MCM8) from Homo sapiens (Human).